An 82-amino-acid polypeptide reads, in one-letter code: Defensin-like protein 208 (82 aa).

The signal sequence occupies residues 1–29 (MAKNLNTVSFTVLLLVLLMASTGILETEA). 3 cysteine pairs are disulfide-bonded: cysteine 38–cysteine 63, cysteine 50–cysteine 76, and cysteine 54–cysteine 78.

It belongs to the DEFL family.

It is found in the secreted. In Arabidopsis thaliana (Mouse-ear cress), this protein is Defensin-like protein 208.